The following is an 87-amino-acid chain: Neutrophil antibiotic peptide NP-3B (87 aa).

An N-terminal signal peptide occupies residues 1–19 (MRTLILLTTLLLLALHTQA). Residues 20-58 (ESPQGSTKEAPDEEQDISVFFGGDKGTALQDAAVKAGVT) constitute a propeptide that is removed on maturation. 3 disulfide bridges follow: cysteine 59–cysteine 87, cysteine 61–cysteine 76, and cysteine 66–cysteine 86.

Belongs to the alpha-defensin family.

Its subcellular location is the secreted. Its function is as follows. Active in vitro against S.aureus, fungi, Gram-positive and Gram-negative bacteria and to a lesser extent against an enveloped virus. This chain is Neutrophil antibiotic peptide NP-3B, found in Rattus norvegicus (Rat).